Here is a 99-residue protein sequence, read N- to C-terminus: Aspartyl/glutamyl-tRNA(Asn/Gln) amidotransferase subunit C (99 aa).

This sequence belongs to the GatC family. Heterotrimer of A, B and C subunits.

It catalyses the reaction L-glutamyl-tRNA(Gln) + L-glutamine + ATP + H2O = L-glutaminyl-tRNA(Gln) + L-glutamate + ADP + phosphate + H(+). It carries out the reaction L-aspartyl-tRNA(Asn) + L-glutamine + ATP + H2O = L-asparaginyl-tRNA(Asn) + L-glutamate + ADP + phosphate + 2 H(+). Allows the formation of correctly charged Asn-tRNA(Asn) or Gln-tRNA(Gln) through the transamidation of misacylated Asp-tRNA(Asn) or Glu-tRNA(Gln) in organisms which lack either or both of asparaginyl-tRNA or glutaminyl-tRNA synthetases. The reaction takes place in the presence of glutamine and ATP through an activated phospho-Asp-tRNA(Asn) or phospho-Glu-tRNA(Gln). The chain is Aspartyl/glutamyl-tRNA(Asn/Gln) amidotransferase subunit C from Corynebacterium glutamicum (strain R).